The following is a 495-amino-acid chain: Surface E' protein (495 aa).

A helical transmembrane segment spans residues 224-235; sequence GTLIGLVALIGV.

The protein localises to the cell membrane. The polypeptide is Surface E' protein (cbbE') (Coxiella burnetii).